The chain runs to 104 residues: ATP-dependent Clp protease adapter protein ClpS (104 aa).

The protein belongs to the ClpS family. In terms of assembly, binds to the N-terminal domain of the chaperone ClpA.

In terms of biological role, involved in the modulation of the specificity of the ClpAP-mediated ATP-dependent protein degradation. The polypeptide is ATP-dependent Clp protease adapter protein ClpS (Desulforapulum autotrophicum (strain ATCC 43914 / DSM 3382 / VKM B-1955 / HRM2) (Desulfobacterium autotrophicum)).